The chain runs to 545 residues: MARGAGLVFFVGVWVVSCLAAAPRTSWKRVTSGEDVVLLPAPAERTRAHKLLWAAEPLDACGPLRPSWVALWPPRRVLETVVDAACMRAPEPLAIAYSPPFPAGDEGLYSELAWRDRVAVVNESLVIYGALETDSGLYTLSVVGLSDEARQVASVVLVVEPAPVPTPTPDDYDEEDDAGVTNARRSAFPPQPPPRRPPVAPPTHPRVIPEVSHVRGVTVHMETLEAILFAPGETFGTNVSIHAIAHDDGPYAMDVVWMRFDVPSSCADMRIYEACLYHPQLPECLSPADAPCAVSSWAYRLAVRSYAGCSRTTPPPRCFAEARMEPVPGLAWLASTVNLEFQHASPQHAGLYLCVVYVDDHIHAWGHMTISTAAQYRNAVVEQHLPQRQPEPVEPTRPHVRAPHPAPSARGPLRLGAVLGAALLLAALGLSAWACMTCWRRRSWRAVKSRASATGPTYIRVADSELYADWSSDSEGERDGSLWQDPPERPDSPSTNGSGFEILSPTAPSVYPHSEGRKSRRPLTTFGSGSPGRRHSQASYPSVLW.

Positions methionine 1 to alanine 20 are cleaved as a signal peptide. Over alanine 21–arginine 414 the chain is Virion surface. The interaction with gI stretch occupies residues cysteine 61–cysteine 86. Residue asparagine 122 is glycosylated (N-linked (GlcNAc...) asparagine; by host). The segment at alanine 162–arginine 206 is disordered. Residue tyrosine 172 is modified to Sulfotyrosine; by host. A compositionally biased stretch (low complexity) spans glycine 179–phenylalanine 188. A compositionally biased stretch (pro residues) spans proline 189–histidine 204. The tract at residues alanine 230–glutamine 375 is fc-binding. Residue asparagine 238 is glycosylated (N-linked (GlcNAc...) asparagine; by host). 3 cysteine pairs are disulfide-bonded: cysteine 266–cysteine 292, cysteine 275–cysteine 284, and cysteine 309–cysteine 318. The interval proline 386–serine 408 is disordered. Residues leucine 415 to cysteine 435 traverse the membrane as a helical segment. The Intravirion segment spans residues methionine 436–tryptophan 545. 2 consecutive short sequence motifs (internalization motif) follow at residues tyrosine 458 to valine 461 and tyrosine 467 to tryptophan 470. Residues glutamate 465 to proline 490 are interaction with VP22 and UL11. The disordered stretch occupies residues tryptophan 470–tryptophan 545. A phosphoserine; by host CK2 mark is found at serine 471 and serine 472. Positions serine 471 to aspartate 479 are acidic. Residues glutamate 475 to aspartate 491 show a composition bias toward basic and acidic residues. At serine 498 the chain carries Phosphoserine.

It belongs to the alphaherpesvirinae glycoprotein E family. In terms of assembly, interacts with gI; this interaction enhances the Fc receptor function of gE. The heterodimer gE/gI interacts with the Fc part of host IgG. Interacts (via C-terminus) with VP22 tegument protein; this interaction is necessary for the recruitment of VP22 to the Golgi and its packaging into virions. Interacts (via C-terminus) with UL11 tegument protein. Post-translationally, phosphorylated on serines within the acidic cluster. Phosphorylation determines whether endocytosed viral gE traffics to the trans-Golgi network or recycles to the cell membrane. In terms of processing, N-glycosylated, and sulfated.

The protein resides in the virion membrane. The protein localises to the host cell membrane. It is found in the host cell junction. Its subcellular location is the host Golgi apparatus membrane. It localises to the host endosome membrane. In epithelial cells, the heterodimer gE/gI is required for the cell-to-cell spread of the virus, by sorting nascent virions to cell junctions. Once the virus reaches the cell junctions, virus particles can spread to adjacent cells extremely rapidly through interactions with cellular receptors that accumulate at these junctions. Implicated in basolateral spread in polarized cells. In neuronal cells, gE/gI is essential for the anterograde spread of the infection throughout the host nervous system. Together with US9, the heterodimer gE/gI is involved in the sorting and transport of viral structural components toward axon tips. In terms of biological role, the heterodimer gE/gI serves as a receptor for the Fc part of host IgG. Dissociation of gE/gI from IgG occurs at acidic pH. May thus be involved in anti-HSV antibodies bipolar bridging, followed by intracellular endocytosis and degradation, thereby interfering with host IgG-mediated immune responses. This Human herpesvirus 2 (strain HG52) (HHV-2) protein is Envelope glycoprotein E (gE).